The following is a 1772-amino-acid chain: Putative stereocilin-like protein (1772 aa).

The first 25 residues, 1–25 (MALSLWPLLLLLLLLLLLSFAVTLA), serve as a signal peptide directing secretion. Asparagine 65, asparagine 427, asparagine 476, and asparagine 565 each carry an N-linked (GlcNAc...) asparagine glycan.

Belongs to the stereocilin family.

Its subcellular location is the secreted. The sequence is that of Putative stereocilin-like protein (STRCP1) from Homo sapiens (Human).